Consider the following 223-residue polypeptide: GrpE protein homolog, mitochondrial (223 aa).

This sequence belongs to the GrpE family. In terms of assembly, component of the PAM complex, at least composed of mtHsp70, mge1, tim44, pam16, pam17 and pam18.

It is found in the mitochondrion matrix. In terms of biological role, essential component of the PAM complex, a complex required for the translocation of transit peptide-containing proteins from the inner membrane into the mitochondrial matrix in an ATP-dependent manner. Seems to control the nucleotide-dependent binding of ssc1 to substrate proteins. This chain is GrpE protein homolog, mitochondrial (mge1), found in Schizosaccharomyces pombe (strain 972 / ATCC 24843) (Fission yeast).